An 894-amino-acid polypeptide reads, in one-letter code: MVQQIDAPLREDVRLLGNLLGETLKQHAGQELFNQIEQIRALAKGARDGQAEAEKQLEQLFLELPDEELLPLTRAFSHFLNFANIAEQYHVVRSRRQAEFDPDANSPNPLVHLFKKFKDKNISTEKLFQQICDLKIELVLTAHPTEVSRRTLIQKYDDINACLSQLDQQKLTPRERQNALANLKQQISSAWQTDEIRQHRPTPVDEAKWGFATIEQTLWNAVPKFIRELNELVQDNCQQNLPLHIAPVRFASWMGGDRDGNPNVTHQITQEVLWLSRWQAADLYLRDIENLRWELSIQSCSEEMVQAIGSPHPEPYREYLRATRERLKATRHWLAQRLQGLEADDSNVIKSKDELLQPLLLCYRSLIDSNLPEIANGQLLDFIYRVNCFGIELLKLDIRQESGRHRQAISAITEYLGLGNFESWTEQARQNFLIQELQSKRPLLPKYINEPEGSLIGHPDVQEVFATMRTLADQPPESLGAYIISMAEYPSDVLAVLLLQKEAGIQHPLRVVPLFETLKDLDGAATTMNTLFNMHWYKQHIQGKHEVMIGYSDSAKDAGFMSANWAQYRAQEELTAIARKHGVQLTLFHGRGGSISRGGAPTQQALFSQPPGSISGAIRVTEQGEMIRFKFGLEGIAMQNLEIYTAATLEATLLPPPEPKAEWRELMNRMTDHSVKVYRQTVRENPHFVKYLRTVTPELELQMLPLGSRPAKRKVSGGIESLRAIPWVFAWTQIRLMLPAWLGTGAAINEVIADQQKATLDEMLQQWPYFQTLIDMLEMVLSKADANIALYYESHLTEDEDLKVLGNQLRQRLKDAVETLLTLKDESKLLSDNEVLDQSMQVRKPYLLPLHLLQAELMKRRRDYLAERQAEHTPVDHALMVSIAGIAAGLRNTG.

Catalysis depends on residues H143 and K556.

This sequence belongs to the PEPCase type 1 family. Mg(2+) serves as cofactor.

The enzyme catalyses oxaloacetate + phosphate = phosphoenolpyruvate + hydrogencarbonate. In terms of biological role, forms oxaloacetate, a four-carbon dicarboxylic acid source for the tricarboxylic acid cycle. The chain is Phosphoenolpyruvate carboxylase from Acinetobacter baumannii (strain ATCC 17978 / DSM 105126 / CIP 53.77 / LMG 1025 / NCDC KC755 / 5377).